Consider the following 349-residue polypeptide: Magnesium-protoporphyrin IX monomethyl ester [oxidative] cyclase (349 aa).

The tract at residues 1-22 is disordered; sequence MTATASASSVSGSLGRNELPPH.

The protein belongs to the AcsF family. Requires Fe cation as cofactor.

It carries out the reaction Mg-protoporphyrin IX 13-monomethyl ester + 3 NADPH + 3 O2 + 2 H(+) = 3,8-divinyl protochlorophyllide a + 3 NADP(+) + 5 H2O. The protein operates within porphyrin-containing compound metabolism; chlorophyll biosynthesis (light-independent). Catalyzes the formation of the isocyclic ring in chlorophyll biosynthesis. Mediates the cyclase reaction, which results in the formation of divinylprotochlorophyllide (Pchlide) characteristic of all chlorophylls from magnesium-protoporphyrin IX 13-monomethyl ester (MgPMME). The sequence is that of Magnesium-protoporphyrin IX monomethyl ester [oxidative] cyclase from Prochlorococcus marinus (strain MIT 9211).